A 200-amino-acid polypeptide reads, in one-letter code: uncharacterized protein (200 aa).

Low complexity-rich tracts occupy residues 1–13 (MTSA…AAES) and 28–44 (PSPA…AGPR). Disordered regions lie at residues 1–116 (MTSA…GGPG) and 137–200 (LPRD…SSFF). A compositionally biased stretch (basic residues) spans 88–102 (RCGRPRRRDPRRRRT). A compositionally biased stretch (low complexity) spans 189–200 (PSSSSGLLSSFF).

This is an uncharacterized protein from Homo sapiens (Human).